A 231-amino-acid chain; its full sequence is MAQSKHGLTKEMTMKYRMEGCVDGHKFVITGEGIGYPFKGKQAINLCVVEGGPLPFAEDILSAAFNYGNRVFTEYPQDIVDYFKNSCPAGYTWDRSFLFEDGAVCICNADITVSVEENCMYHESKFYGVNFPADGPVMKKMTDNWEPSCEKIIPVPKQGILKGDVSMYLLLKDGGRLRCQFDTVYKAKSVPRKMPDWHFIQHKLTREDRSDAKNQKWHLTEHAIASGSALP.

Positions 66-68 form a cross-link, 5-imidazolinone (Asn-Gly); sequence NYG. 2,3-didehydrotyrosine is present on Tyr67.

Belongs to the GFP family. Post-translationally, contains a chromophore consisting of modified amino acid residues. The chromophore is formed by autocatalytic backbone condensation between Xaa-N and Gly-(N+2), and oxidation of Tyr-(N+1) to didehydrotyrosine. Maturation of the chromophore requires nothing other than molecular oxygen. The precise stereochemistry of the tyrosine has not been determined. As to expression, tentacle and oral disk.

In terms of biological role, pigment protein that is yellow-green in color. This is GFP-like fluorescent chromoprotein FP506 from Zoanthus sp. (Green polyp).